The following is a 98-amino-acid chain: Co-chaperonin GroES 5 (98 aa).

The protein belongs to the GroES chaperonin family. In terms of assembly, heptamer of 7 subunits arranged in a ring. Interacts with the chaperonin GroEL.

The protein resides in the cytoplasm. Its function is as follows. Together with the chaperonin GroEL, plays an essential role in assisting protein folding. The GroEL-GroES system forms a nano-cage that allows encapsulation of the non-native substrate proteins and provides a physical environment optimized to promote and accelerate protein folding. GroES binds to the apical surface of the GroEL ring, thereby capping the opening of the GroEL channel. The chain is Co-chaperonin GroES 5 from Mesorhizobium japonicum (strain LMG 29417 / CECT 9101 / MAFF 303099) (Mesorhizobium loti (strain MAFF 303099)).